We begin with the raw amino-acid sequence, 488 residues long: MGPLKLNTANLSQIVAAGAGRVKVPTYRRGPALKEGIVHVGVGGFHRAHLAVYVDQLMQNHGVTDYAICGVGLQPFDSAMRDALSSQDNLYTVIERSAKGSFANVIGSINSYLFAPDDREAVIAKMAHPDTRIVSLTITESGYYYNENTHELQSEHPDIQFDLDPANEKTPRTTFGFLYAALARRHQQEEWFHHPSHARVFRPSPHPEVAQWITDKGAFPNAMVDRITPQTSPADKESLANTMGIEDSWPVVTEPFMQWVIEDQFSDGRPPFEKVGVQVVKDVHAVEEFEKHKLRLLNGSHSAIGYPGQMAGFNYVHEVLENPDFNKFVWQMMQEEVKPSLPEIPGVDIDQYCKTLMERFSNPTIMDQLPRICLNASGKIPQFIMPSIAEAIWVKGPLRRLCFVAAAWFRYINGVDDQGNTFTVDDPMREELQAKARAGGTKPSELLSITSLFGDDLRNDKRFMQEITNAMEDIARDGILKTLPKYID.

Residue 37–48 participates in NAD(+) binding; sequence IVHVGVGGFHRA.

Belongs to the mannitol dehydrogenase family. Monomer.

It catalyses the reaction D-mannitol + NAD(+) = D-fructose + NADH + H(+). In terms of biological role, catalyzes the NAD(H)-dependent interconversion of D-fructose and D-mannitol in the mannitol metabolic pathway. In Aspergillus niger (strain ATCC MYA-4892 / CBS 513.88 / FGSC A1513), this protein is Mannitol 2-dehydrogenase.